We begin with the raw amino-acid sequence, 156 residues long: Protein CURVATURE THYLAKOID 1C, chloroplastic (156 aa).

The N-terminal 55 residues, 1-55 (MASISATLPSPLLLTQRKSNLTSIQKLPFSLTRGTNDLSPLSLTRNPSSISLMVK), are a transit peptide targeting the chloroplast. Residues 56–83 (ASGESSDSSTDLDVVSTIQNVWDKSEDR) lie on the Stromal side of the membrane. The chain crosses the membrane as a helical span at residues 84 to 104 (LGLIGLGFAGIVALWASLNLI). At 105-109 (TAIDK) the chain is on the lumenal side. Residues 110 to 130 (LPVISSGFELVGILFSTWFTY) form a helical membrane-spanning segment. Residues 131 to 156 (RYLLFKPDRQELSKIVKKSVADILGQ) lie on the Stromal side of the membrane.

Belongs to the CURT family. In terms of assembly, homo- and heterodimers and trimers. Interacts with PSAD2.

Its subcellular location is the plastid. The protein resides in the chloroplast thylakoid membrane. Its function is as follows. Determines thylakoid architecture by inducing membrane curvature. This Arabidopsis thaliana (Mouse-ear cress) protein is Protein CURVATURE THYLAKOID 1C, chloroplastic (CURT1C).